A 124-amino-acid polypeptide reads, in one-letter code: Putative iron-sulfur cluster insertion protein ErpA (124 aa).

Positions 52, 116, and 118 each coordinate iron-sulfur cluster.

The protein belongs to the HesB/IscA family. As to quaternary structure, homodimer. It depends on iron-sulfur cluster as a cofactor.

Its function is as follows. Required for insertion of 4Fe-4S clusters. This is Putative iron-sulfur cluster insertion protein ErpA from Ralstonia pickettii (strain 12J).